The following is a 677-amino-acid chain: Bargin (677 aa).

Composition is skewed to low complexity over residues 1–13 and 29–39; these read MDRGLPGPATPAV and APHAAAGPDGQ. Disordered stretches follow at residues 1–39 and 168–190; these read MDRGLPGPATPAVTPQPPARPQDDEEAAAPHAAAGPDGQ and SQATKNSGSSQGLGGSPGSHSHT. Positions 25–270 constitute a BAR domain; the sequence is EEAAAPHAAA…RENHGQADHS (246 aa). Phosphoserine occurs at positions 183, 270, and 272. The region spanning 284–477 is the Rho-GAP domain; it reads VSLATHLQEL…ALIQSADTLF (194 aa). A disordered region spans residues 504-577; the sequence is SEELPSTAVP…DMARRSTGSL (74 aa). Residues 516–530 are compositionally biased toward pro residues; sequence ATTPAPAPAPAPAPA. A phosphoserine mark is found at Ser-552 and Ser-558. The interval 574 to 677 is mediates non-covalent binding of poly-ubiquitin chains; the sequence is TGSLAAAVET…IADLTEGLED (104 aa).

Expressed in brain (at protein level).

The protein resides in the cell membrane. The protein localises to the cytoplasm. It is found in the cytosol. GTPase activating protein (GAP) which specifically converts GTP-bound RAC1 and CDC42 in their inactive GDP-bound form. The GAP activity is enhanced by the non-covalent binding of K-29 and K-48 polyubiquitin chains. In Homo sapiens (Human), this protein is Bargin.